A 654-amino-acid polypeptide reads, in one-letter code: Acetyl-coenzyme A synthetase (654 aa).

CoA-binding positions include Arg-190–Lys-193 and Thr-313. ATP is bound by residues Gly-389 to Pro-391, Asp-413 to Thr-418, Asp-504, and Arg-519. Ser-527 contributes to the CoA binding site. Residue Arg-530 coordinates ATP. Residues Val-541 and Val-546 each contribute to the Mg(2+) site. The residue at position 613 (Lys-613) is an N6-acetyllysine.

It belongs to the ATP-dependent AMP-binding enzyme family. The cofactor is Mg(2+). In terms of processing, acetylated. Deacetylation by the SIR2-homolog deacetylase activates the enzyme.

The catalysed reaction is acetate + ATP + CoA = acetyl-CoA + AMP + diphosphate. Its function is as follows. Catalyzes the conversion of acetate into acetyl-CoA (AcCoA), an essential intermediate at the junction of anabolic and catabolic pathways. AcsA undergoes a two-step reaction. In the first half reaction, AcsA combines acetate with ATP to form acetyl-adenylate (AcAMP) intermediate. In the second half reaction, it can then transfer the acetyl group from AcAMP to the sulfhydryl group of CoA, forming the product AcCoA. The sequence is that of Acetyl-coenzyme A synthetase from Leptospira borgpetersenii serovar Hardjo-bovis (strain L550).